A 270-amino-acid chain; its full sequence is MLPYPQIDPVAVAIGPLQIHWYGLMYLVGIGGAWLLASRRLNKFDPTWTKEKLSDLIFWLAMGVIVGGRLGYVLFYDLSAYIANPLLIFEVWKGGMAFHGGFVGVMIAAWWFGKRNGKSFFQLMDFVAPLVPIGLGAGRIGNFINAELWGKPTDVPWAMVFPPFSDPAQLARHPSQLYQFALEGVALFIILNLYARKPRPTMAVSGMFALFYGIFRFVVEFVRVPDAQLGYLAWGWVTMGQILSLPMIIAGLFLIWLAYKRDPAASKAAV.

7 helical membrane passes run 10-30 (VAVA…LVGI), 56-76 (LIFW…VLFY), 92-112 (WKGG…AWWF), 120-140 (FFQL…AGRI), 175-195 (SQLY…NLYA), 202-222 (MAVS…VEFV), and 237-257 (VTMG…LIWL). Arg139 provides a ligand contact to a 1,2-diacyl-sn-glycero-3-phospho-(1'-sn-glycerol).

This sequence belongs to the Lgt family.

It is found in the cell inner membrane. It catalyses the reaction L-cysteinyl-[prolipoprotein] + a 1,2-diacyl-sn-glycero-3-phospho-(1'-sn-glycerol) = an S-1,2-diacyl-sn-glyceryl-L-cysteinyl-[prolipoprotein] + sn-glycerol 1-phosphate + H(+). It functions in the pathway protein modification; lipoprotein biosynthesis (diacylglyceryl transfer). Functionally, catalyzes the transfer of the diacylglyceryl group from phosphatidylglycerol to the sulfhydryl group of the N-terminal cysteine of a prolipoprotein, the first step in the formation of mature lipoproteins. The polypeptide is Phosphatidylglycerol--prolipoprotein diacylglyceryl transferase (Pseudomonas syringae pv. tomato (strain ATCC BAA-871 / DC3000)).